The sequence spans 252 residues: Agamous-like MADS-box protein AGL6 (252 aa).

In terms of domain architecture, MADS-box spans 3–57 (RGRVEMKRIENKINRQVTFSKRRNGLLKKAYELSVLCDAEVALIIFSSRGKLYEF). One can recognise a K-box domain in the interval 86–176 (TQSWCQEVTK…KIKFETEGHA (91 aa)). Residues 91-173 (QEVTKLKSKY…KQLKIKFETE (83 aa)) adopt a coiled-coil conformation.

Forms a heterodimer with AGAMOUS. Interacts with AGL15 and AGL16. Preferentially expressed in flowers.

The protein resides in the nucleus. Its function is as follows. Probable transcription factor. Forms a heterodimer via the K-box domain with AG, that could be involved in genes regulation during floral meristem development. This Arabidopsis thaliana (Mouse-ear cress) protein is Agamous-like MADS-box protein AGL6 (AGL6).